The chain runs to 92 residues: MLVMNLQYFAHKKGVGSSRNGRDSEAKRLGVKRSDGQAVLSGNILVRQRGTKIHPGNNVGLGSDDTLFALIDGVVKFERKGRDKKQVSVYAV.

Residues 1–9 constitute a propeptide that is removed on maturation; the sequence is MLVMNLQYF.

Belongs to the bacterial ribosomal protein bL27 family. Post-translationally, the N-terminus is cleaved by ribosomal processing cysteine protease Prp.

This Heliobacterium modesticaldum (strain ATCC 51547 / Ice1) protein is Large ribosomal subunit protein bL27.